The primary structure comprises 1171 residues: Zinc finger BED domain-containing protein 4 (1171 aa).

The disordered stretch occupies residues 25 to 62 (EEEDDDGIPPDSLERMDFKSEQEDMKQTDSGGERAGLG). Basic and acidic residues predominate over residues 36 to 51 (SLERMDFKSEQEDMKQ). Lys43 is covalently cross-linked (Glycyl lysine isopeptide (Lys-Gly) (interchain with G-Cter in SUMO2)). 2 BED-type zinc fingers span residues 115–172 (RKKS…LIQE) and 285–342 (RRRS…VLQE). Zn(2+)-binding residues include Cys136, Cys139, His160, His165, Cys306, Cys309, His330, and His335. Low complexity predominate over residues 362 to 385 (LLPPEGELSSVSSSPVKPVRESPS). A disordered region spans residues 362 to 405 (LLPPEGELSSVSSSPVKPVRESPSASSSPDRLTEDLQSHLNPGD). 2 BED-type zinc fingers span residues 456–512 (RLKS…VGSQ) and 558–615 (KKTS…LKTE). The Zn(2+) site is built by Cys477 and Cys480. A Glycyl lysine isopeptide (Lys-Gly) (interchain with G-Cter in SUMO2) cross-link involves residue Lys489. Zn(2+) contacts are provided by His500, His505, Cys579, Cys582, His603, and His608. The disordered stretch occupies residues 614–640 (TEVSETARPSSPDTRVPRGTELSGASS). Ser624 carries the phosphoserine modification. Residues 1086-1171 (LAYLEEEVLE…VNLPLIYFQY (86 aa)) are required for homodimerization and nuclear accumulation.

In terms of assembly, homodimer; via C-terminus. Interacts with MYH9. Interacts with SAFB/SAFB1. Expressed in testis, heart, lung, and weakly expressed in brain, liver, muscle, placenta and small intestine. Expressed in the retina, found in the cone photoreceptors, Mueller cells, cone pedicles and in the innermost retinal layer.

Its subcellular location is the nucleus. It is found in the cytoplasm. The protein resides in the photoreceptor inner segment. Transcriptional regulator that binds to poly-guanine tracts in gene promoters and activates transcription. Able to bind single- and double-stranded DNA and RNA. In Homo sapiens (Human), this protein is Zinc finger BED domain-containing protein 4 (ZBED4).